The following is a 753-amino-acid chain: 5-methyltetrahydropteroyltriglutamate--homocysteine methyltransferase (753 aa).

5-methyltetrahydropteroyltri-L-glutamate is bound by residues 17–20 (RELK) and Lys117. L-homocysteine-binding positions include 431–433 (IGS) and Glu484. L-methionine contacts are provided by residues 431-433 (IGS) and Glu484. Residues 515 to 516 (RC) and Trp561 each bind 5-methyltetrahydropteroyltri-L-glutamate. Residue Asp599 participates in L-homocysteine binding. Asp599 provides a ligand contact to L-methionine. Glu605 lines the 5-methyltetrahydropteroyltri-L-glutamate pocket. Positions 641, 643, and 665 each coordinate Zn(2+). His694 serves as the catalytic Proton donor. Cys726 is a binding site for Zn(2+).

It belongs to the vitamin-B12 independent methionine synthase family. In terms of assembly, monomer. The cofactor is Zn(2+).

It catalyses the reaction 5-methyltetrahydropteroyltri-L-glutamate + L-homocysteine = tetrahydropteroyltri-L-glutamate + L-methionine. Its pathway is amino-acid biosynthesis; L-methionine biosynthesis via de novo pathway; L-methionine from L-homocysteine (MetE route): step 1/1. Its function is as follows. Catalyzes the transfer of a methyl group from 5-methyltetrahydrofolate to homocysteine resulting in methionine formation. The sequence is that of 5-methyltetrahydropteroyltriglutamate--homocysteine methyltransferase from Escherichia coli (strain K12).